We begin with the raw amino-acid sequence, 154 residues long: Large ribosomal subunit protein uL13 (154 aa).

Belongs to the universal ribosomal protein uL13 family. Part of the 50S ribosomal subunit.

This protein is one of the early assembly proteins of the 50S ribosomal subunit, although it is not seen to bind rRNA by itself. It is important during the early stages of 50S assembly. This is Large ribosomal subunit protein uL13 from Rhizobium meliloti (strain 1021) (Ensifer meliloti).